The chain runs to 68 residues: Metallothionein-3 (68 aa).

N-acetylmethionine is present on methionine 1. The segment at 1–30 (MDPETCPCPTGGSCTCSDPCKCEGCTCASS) is beta. A divalent metal cation contacts are provided by cysteine 6, cysteine 8, cysteine 14, cysteine 16, cysteine 20, cysteine 22, cysteine 25, and cysteine 27. Residues 31–68 (KKSCCSCCPAECEKCAKDCVCKGGEGAEAEEKKCSCCQ) are alpha. Serine 33 carries the post-translational modification Phosphoserine. A divalent metal cation is bound by residues cysteine 34, cysteine 35, cysteine 37, cysteine 38, cysteine 42, cysteine 45, cysteine 49, cysteine 51, cysteine 64, cysteine 66, and cysteine 67.

Belongs to the metallothionein superfamily. Type 1 family.

Its function is as follows. Binds heavy metals. Contains five zinc and one copper atoms per polypeptide chain and only a negligible amount of cadmium. The chain is Metallothionein-3 (MT3) from Bos mutus grunniens (Wild yak).